The sequence spans 708 residues: Homeobox-leucine zipper protein HDG10 (708 aa).

Residues 1–24 are disordered; that stretch reads MDSSHNDSSSDEEGIDSNNRRHHS. A DNA-binding region (homeobox) is located at residues 16–75; that stretch reads DSNNRRHHSNHQVQRLEAFFHECPHPDDSQRRQLGNELNLKHKQIKFWFQNRRTQARIHN. Positions 119–141 form a coiled coil; the sequence is LCNLQKLRTKNVILKTEYERLSS. Residues 162-188 form a disordered region; it reads GPSTYGSTSNNRPASYGSSSNHLPQQS. The span at 165–188 shows a compositional bias: polar residues; that stretch reads TYGSTSNNRPASYGSSSNHLPQQS. The region spanning 218–456 is the START domain; it reads SQLEKNRMFE…LQRMCERLSL (239 aa).

The protein belongs to the HD-ZIP homeobox family. Class IV subfamily. In terms of assembly, interacts with ANT, BBM and AIL1. In terms of tissue distribution, expressed in exclusively in anthers with highest levels in the tapetum and pollen grains.

The protein resides in the nucleus. Functionally, probable transcription factor. This is Homeobox-leucine zipper protein HDG10 from Arabidopsis thaliana (Mouse-ear cress).